A 162-amino-acid chain; its full sequence is Protein archease (162 aa).

Ca(2+) contacts are provided by Asp34, Asp161, and Ile162.

Belongs to the archease family. Component of the tRNA-splicing ligase complex.

In terms of biological role, component of the tRNA-splicing ligase complex required to facilitate the enzymatic turnover of catalytic subunit RTCB. Together with ddx1, acts by facilitating the guanylylation of RTCB, a key intermediate step in tRNA ligation. The protein is Protein archease (zbtb8os) of Danio rerio (Zebrafish).